Consider the following 62-residue polypeptide: DNA-directed RNA polymerase subunit Rpo10 (62 aa).

4 residues coordinate Zn(2+): Cys-6, Cys-9, Cys-43, and Cys-44.

It belongs to the archaeal Rpo10/eukaryotic RPB10 RNA polymerase subunit family. Part of the RNA polymerase complex. Zn(2+) is required as a cofactor.

The protein resides in the cytoplasm. The enzyme catalyses RNA(n) + a ribonucleoside 5'-triphosphate = RNA(n+1) + diphosphate. Its function is as follows. DNA-dependent RNA polymerase (RNAP) catalyzes the transcription of DNA into RNA using the four ribonucleoside triphosphates as substrates. In Methanosarcina barkeri (strain Fusaro / DSM 804), this protein is DNA-directed RNA polymerase subunit Rpo10.